We begin with the raw amino-acid sequence, 250 residues long: Triosephosphate isomerase (250 aa).

A substrate-binding site is contributed by 9–11 (NWK). Histidine 96 functions as the Electrophile in the catalytic mechanism. Glutamate 166 (proton acceptor) is an active-site residue. Residues glycine 172, serine 212, and 233-234 (GG) each bind substrate.

This sequence belongs to the triosephosphate isomerase family. In terms of assembly, homodimer.

The protein localises to the cytoplasm. The enzyme catalyses D-glyceraldehyde 3-phosphate = dihydroxyacetone phosphate. It functions in the pathway carbohydrate biosynthesis; gluconeogenesis. It participates in carbohydrate degradation; glycolysis; D-glyceraldehyde 3-phosphate from glycerone phosphate: step 1/1. Involved in the gluconeogenesis. Catalyzes stereospecifically the conversion of dihydroxyacetone phosphate (DHAP) to D-glyceraldehyde-3-phosphate (G3P). The sequence is that of Triosephosphate isomerase from Chlorobium luteolum (strain DSM 273 / BCRC 81028 / 2530) (Pelodictyon luteolum).